A 296-amino-acid chain; its full sequence is Homeobox protein SIX2 (296 aa).

The homeobox DNA-binding region spans 124-183 (GEETSYCFKEKSRSVLREWYAHNPYPSPREKRELAEATGLTTTQVSNWFKNRRQRDRAAE). A disordered region spans residues 168–284 (VSNWFKNRRQ…HHHSLQDSIL (117 aa)). Positions 179–190 (DRAAEAKERENS) are enriched in basic and acidic residues. 2 stretches are compositionally biased toward low complexity: residues 191-206 (ENSN…SSLN) and 228-237 (HSSSSPALLL). Residues 254–264 (PPGPSAVPVPV) are compositionally biased toward pro residues.

Belongs to the SIX/Sine oculis homeobox family. Interacts with TCF7L2; in a canonical Wnt signaling independent manner; prevents transcription of differentiation genes in cap mesenchyme. Interacts with OSR1; form a strong repressor complex with TCF7L2, TLE2 and TLE3 to prevent the activation of Wnt/beta-catenin target genes in the cap mesenchyme. Interacts with HOXA11, EYA1 and EYA3. Expressed in phalangeal tendons, in smooth muscle and in head and body mesenchyme.

It is found in the nucleus. Its function is as follows. Transcription factor that plays an important role in the development of several organs, including kidney, skull and stomach. During kidney development, maintains cap mesenchyme multipotent nephron progenitor cells in an undifferentiated state by opposing the inductive signals emanating from the ureteric bud and cooperates with WNT9B to promote renewing progenitor cells proliferation. Acts through its interaction with TCF7L2 and OSR1 in a canonical Wnt signaling independent manner preventing transcription of differentiation genes in cap mesenchyme such as WNT4. Also acts independently of OSR1 to activate expression of many cap mesenchyme genes, including itself, GDNF and OSR1. During craniofacial development plays a role in growth and elongation of the cranial base through regulation of chondrocyte differentiation. During stomach organogenesis, controls pyloric sphincter formation and mucosal growth through regulation of a gene network including NKX2-5, BMPR1B, BMP4, SOX9 and GREM1. During branchial arch development, acts to mediate HOXA2 control over the insulin-like growth factor pathway. May also be involved in limb tendon and ligament development. Plays a role in cell proliferation and migration. In Mus musculus (Mouse), this protein is Homeobox protein SIX2 (Six2).